The primary structure comprises 150 residues: Protein A151R (150 aa).

This sequence belongs to the asfivirus A151R family. As to quaternary structure, monomer. Homodimer. Interacts with protein B119L. Interacts with membrane protein E248R. The cofactor is Zn(2+).

Functionally, may participate in a redox cascade for the formation of disulfide bonds in viral proteins. In African swine fever virus (isolate Pig/Kenya/KEN-50/1950) (ASFV), this protein is Protein A151R.